A 421-amino-acid polypeptide reads, in one-letter code: Serine hydroxymethyltransferase (421 aa).

(6S)-5,6,7,8-tetrahydrofolate is bound by residues leucine 120 and 124–126; that span reads GHL. Lysine 229 is subject to N6-(pyridoxal phosphate)lysine. Position 354-356 (354-356) interacts with (6S)-5,6,7,8-tetrahydrofolate; sequence SPF.

Belongs to the SHMT family. As to quaternary structure, homodimer. It depends on pyridoxal 5'-phosphate as a cofactor.

Its subcellular location is the cytoplasm. It catalyses the reaction (6R)-5,10-methylene-5,6,7,8-tetrahydrofolate + glycine + H2O = (6S)-5,6,7,8-tetrahydrofolate + L-serine. It participates in one-carbon metabolism; tetrahydrofolate interconversion. The protein operates within amino-acid biosynthesis; glycine biosynthesis; glycine from L-serine: step 1/1. In terms of biological role, catalyzes the reversible interconversion of serine and glycine with tetrahydrofolate (THF) serving as the one-carbon carrier. This reaction serves as the major source of one-carbon groups required for the biosynthesis of purines, thymidylate, methionine, and other important biomolecules. Also exhibits THF-independent aldolase activity toward beta-hydroxyamino acids, producing glycine and aldehydes, via a retro-aldol mechanism. This chain is Serine hydroxymethyltransferase, found in Opitutus terrae (strain DSM 11246 / JCM 15787 / PB90-1).